The following is a 432-amino-acid chain: Glutamate--tRNA ligase 2 (432 aa).

Residues 6–16 (PSPTGDMHIGN) carry the 'HIGH' region motif. The short motif at 235-239 (KMSKR) is the 'KMSKS' region element. Lysine 238 provides a ligand contact to ATP.

The protein belongs to the class-I aminoacyl-tRNA synthetase family. Glutamate--tRNA ligase type 1 subfamily. Monomer.

The protein localises to the cytoplasm. It catalyses the reaction tRNA(Glu) + L-glutamate + ATP = L-glutamyl-tRNA(Glu) + AMP + diphosphate. Catalyzes the attachment of glutamate to tRNA(Glu) in a two-step reaction: glutamate is first activated by ATP to form Glu-AMP and then transferred to the acceptor end of tRNA(Glu). The polypeptide is Glutamate--tRNA ligase 2 (Sulfurimonas denitrificans (strain ATCC 33889 / DSM 1251) (Thiomicrospira denitrificans (strain ATCC 33889 / DSM 1251))).